Reading from the N-terminus, the 614-residue chain is MNAQLSALQQQAQQLSASVTRPIPGSRKIHVPGSRPDLQVPMREIALTRTPTLFGGEENAPVTVYDTSGPYTDPEVRIDLSAGLPALRRGWVEERGDTEQLEGLSSSFGRDREHDPKLDAVRFPARSLPRRARAGANVTQMHYARRGIITPEMEFVAIRENQRLDAIRDAGLLQQHPGEAFGASIQKVITPEFVRDEIARGRAVLPNNINHPESEPMIIGRNFLTKINANIGNSAVSSGIAEEVEKLVWAIRWGGDTVMDLSTGKHIHETREWIIRNSPVAIGTVPIYQALEKVDGRAEALTWEIFRDTLIEQAEQGVDYFTIHAGVLLRYVPLTAKRVTGIVSRGGSIMAKWCLAHHKENFLYTHFEDICEIMKAYDVTFSLGDGLRPGCIADANDAAQFGELETLGELTKIAWKHDVQTMIEGPGHVPMQLIKENMDKQLRECGEAPFYTLGPLTTDIAPGYDHITSAIGAAMIGWFGTAMLCYVTPKEHLGLPNRQDVRDGIMAYRIAAHAADLAKGHPGAQVRDNALSKARFEFRWEDQFHLGLDPEKAKEFHDETLPKDAHKLAHFCSMCGPHFCSMKITQDVRDYAEAGMKEKSQEFRAGGAEVYRQG.

Residues Asn230, Met259, Tyr288, His324, 344 to 346 (SRG), 385 to 388 (DGLR), and Glu424 contribute to the substrate site. His428 serves as a coordination point for Zn(2+). Tyr451 lines the substrate pocket. A Zn(2+)-binding site is contributed by His492. Positions 572, 575, and 580 each coordinate [4Fe-4S] cluster.

This sequence belongs to the ThiC family. Homodimer. Requires [4Fe-4S] cluster as cofactor.

The catalysed reaction is 5-amino-1-(5-phospho-beta-D-ribosyl)imidazole + S-adenosyl-L-methionine = 4-amino-2-methyl-5-(phosphooxymethyl)pyrimidine + CO + 5'-deoxyadenosine + formate + L-methionine + 3 H(+). It participates in cofactor biosynthesis; thiamine diphosphate biosynthesis. In terms of biological role, catalyzes the synthesis of the hydroxymethylpyrimidine phosphate (HMP-P) moiety of thiamine from aminoimidazole ribotide (AIR) in a radical S-adenosyl-L-methionine (SAM)-dependent reaction. This Stenotrophomonas maltophilia (strain K279a) protein is Phosphomethylpyrimidine synthase.